We begin with the raw amino-acid sequence, 1076 residues long: Isoleucine--tRNA ligase (1076 aa).

Residues 47-57 (PYTTGQIHLGT) carry the 'HIGH' region motif. The short motif at 591–595 (KMSKS) is the 'KMSKS' region element. Lys-594 serves as a coordination point for ATP.

This sequence belongs to the class-I aminoacyl-tRNA synthetase family. IleS type 2 subfamily. Monomer. Requires Zn(2+) as cofactor.

The protein localises to the cytoplasm. The catalysed reaction is tRNA(Ile) + L-isoleucine + ATP = L-isoleucyl-tRNA(Ile) + AMP + diphosphate. In terms of biological role, catalyzes the attachment of isoleucine to tRNA(Ile). As IleRS can inadvertently accommodate and process structurally similar amino acids such as valine, to avoid such errors it has two additional distinct tRNA(Ile)-dependent editing activities. One activity is designated as 'pretransfer' editing and involves the hydrolysis of activated Val-AMP. The other activity is designated 'posttransfer' editing and involves deacylation of mischarged Val-tRNA(Ile). The chain is Isoleucine--tRNA ligase from Methanoregula boonei (strain DSM 21154 / JCM 14090 / 6A8).